The sequence spans 219 residues: Orotate phosphoribosyltransferase (219 aa).

A 5-phospho-alpha-D-ribose 1-diphosphate-binding site is contributed by Lys-26. An orotate-binding site is contributed by 34–35 (FF). Residues 72-73 (YK), Arg-98, Lys-99, Lys-102, His-104, and 124-132 (DDVITAGTA) contribute to the 5-phospho-alpha-D-ribose 1-diphosphate site. Orotate contacts are provided by Thr-128 and Arg-156.

The protein belongs to the purine/pyrimidine phosphoribosyltransferase family. PyrE subfamily. Homodimer. Requires Mg(2+) as cofactor.

The catalysed reaction is orotidine 5'-phosphate + diphosphate = orotate + 5-phospho-alpha-D-ribose 1-diphosphate. Its pathway is pyrimidine metabolism; UMP biosynthesis via de novo pathway; UMP from orotate: step 1/2. Catalyzes the transfer of a ribosyl phosphate group from 5-phosphoribose 1-diphosphate to orotate, leading to the formation of orotidine monophosphate (OMP). This is Orotate phosphoribosyltransferase from Xanthomonas axonopodis pv. citri (strain 306).